The sequence spans 124 residues: uncharacterized protein (124 aa).

An N-terminal signal peptide occupies residues 1 to 22 (MGTSSVLLMIASSLILLEVVMT).

This is an uncharacterized protein from Caenorhabditis elegans.